An 88-amino-acid polypeptide reads, in one-letter code: Large ribosomal subunit protein bL27 (88 aa).

The tract at residues 1 to 23 (MAHKKGTGSTRNGRDSNAQRLGV) is disordered. Residues 7-19 (TGSTRNGRDSNAQ) show a composition bias toward polar residues.

Belongs to the bacterial ribosomal protein bL27 family.

The sequence is that of Large ribosomal subunit protein bL27 (rpmA) from Synechococcus elongatus (strain ATCC 33912 / PCC 7942 / FACHB-805) (Anacystis nidulans R2).